An 85-amino-acid chain; its full sequence is U4-theraphotoxin-Hhn1i (85 aa).

The signal sequence occupies residues 1–22 (MKVTLIAILTCAAVLVLHTTAA). A propeptide spanning residues 23–48 (EELEAESQLMEVGMPDTELAAVDEER) is cleaved from the precursor. Disulfide bonds link Cys52–Cys66, Cys56–Cys77, and Cys71–Cys82.

This sequence belongs to the neurotoxin 12 (Hwtx-2) family. 02 (Hwtx-2) subfamily. In terms of tissue distribution, expressed by the venom gland.

The protein localises to the secreted. Functionally, postsynaptic neurotoxin. This Cyriopagopus hainanus (Chinese bird spider) protein is U4-theraphotoxin-Hhn1i.